A 601-amino-acid polypeptide reads, in one-letter code: Elongation factor 4 (601 aa).

The tr-type G domain maps to 5–187 (EHIRNFSIIA…AIVERLPAPE (183 aa)). GTP is bound by residues 17-22 (DHGKST) and 134-137 (NKVD).

This sequence belongs to the TRAFAC class translation factor GTPase superfamily. Classic translation factor GTPase family. LepA subfamily.

It is found in the cell inner membrane. It carries out the reaction GTP + H2O = GDP + phosphate + H(+). Functionally, required for accurate and efficient protein synthesis under certain stress conditions. May act as a fidelity factor of the translation reaction, by catalyzing a one-codon backward translocation of tRNAs on improperly translocated ribosomes. Back-translocation proceeds from a post-translocation (POST) complex to a pre-translocation (PRE) complex, thus giving elongation factor G a second chance to translocate the tRNAs correctly. Binds to ribosomes in a GTP-dependent manner. The chain is Elongation factor 4 from Nitratidesulfovibrio vulgaris (strain DSM 19637 / Miyazaki F) (Desulfovibrio vulgaris).